A 106-amino-acid polypeptide reads, in one-letter code: ATP-dependent Clp protease adapter protein ClpS (106 aa).

The protein belongs to the ClpS family. In terms of assembly, binds to the N-terminal domain of the chaperone ClpA.

Functionally, involved in the modulation of the specificity of the ClpAP-mediated ATP-dependent protein degradation. This Nocardia farcinica (strain IFM 10152) protein is ATP-dependent Clp protease adapter protein ClpS.